The sequence spans 347 residues: S-adenosylmethionine:tRNA ribosyltransferase-isomerase (347 aa).

This sequence belongs to the QueA family. As to quaternary structure, monomer.

The protein resides in the cytoplasm. It carries out the reaction 7-aminomethyl-7-carbaguanosine(34) in tRNA + S-adenosyl-L-methionine = epoxyqueuosine(34) in tRNA + adenine + L-methionine + 2 H(+). It participates in tRNA modification; tRNA-queuosine biosynthesis. Transfers and isomerizes the ribose moiety from AdoMet to the 7-aminomethyl group of 7-deazaguanine (preQ1-tRNA) to give epoxyqueuosine (oQ-tRNA). This chain is S-adenosylmethionine:tRNA ribosyltransferase-isomerase, found in Halalkalibacterium halodurans (strain ATCC BAA-125 / DSM 18197 / FERM 7344 / JCM 9153 / C-125) (Bacillus halodurans).